A 151-amino-acid chain; its full sequence is Acidic phospholipase A2 2 (151 aa).

The N-terminal stretch at 1-27 (MYPAHLLVLLAVCVSLLGAASIPARPL) is a signal peptide. 7 disulfides stabilise this stretch: Cys-38–Cys-104, Cys-54–Cys-151, Cys-56–Cys-72, Cys-71–Cys-132, Cys-78–Cys-125, Cys-88–Cys-118, and Cys-111–Cys-123. The Ca(2+) site is built by Tyr-55, Gly-57, and Gly-59. Residue His-75 is part of the active site. A Ca(2+)-binding site is contributed by Asp-76. Residue Asp-126 is part of the active site.

Belongs to the phospholipase A2 family. Group I subfamily. D49 sub-subfamily. It depends on Ca(2+) as a cofactor. In terms of tissue distribution, expressed by the venom gland.

It is found in the secreted. The catalysed reaction is a 1,2-diacyl-sn-glycero-3-phosphocholine + H2O = a 1-acyl-sn-glycero-3-phosphocholine + a fatty acid + H(+). PLA2 catalyzes the calcium-dependent hydrolysis of the 2-acyl groups in 3-sn-phosphoglycerides. This chain is Acidic phospholipase A2 2, found in Tropidechis carinatus (Australian rough-scaled snake).